We begin with the raw amino-acid sequence, 75 residues long: CLAVATA3/ESR (CLE)-related protein 33 (75 aa).

The signal sequence occupies residues 1–22; the sequence is MASWRMLCFVLLFTSILICHDA. Hydroxyproline occurs at positions 67 and 70. The O-linked (Ara...) hydroxyproline glycan is linked to proline 70.

Belongs to the CLV3/ESR signal peptide family. The O-glycosylation (arabinosylation) of the hydroxyproline Pro-70 enhances binding affinity of the CLE33p peptide for its receptor. As to expression, expressed in root vasculature.

The protein resides in the secreted. It localises to the extracellular space. Functionally, signaling peptide involved in the regulation of root colonization by arbuscular mycorrhizal (AM) fungi. Moves from root to shoot to function with the receptor kinase SUNN, in a signaling pathway that repress strigolactone biosynthetic genes and strigolactone content in the roots, and consequently reduces the promotion of further colonization by AM fungi. The polypeptide is CLAVATA3/ESR (CLE)-related protein 33 (Medicago truncatula (Barrel medic)).